The primary structure comprises 231 residues: ATP-dependent dethiobiotin synthetase BioD (231 aa).

12 to 17 (EVGKTV) lines the ATP pocket. T16 is a Mg(2+) binding site. Residue K37 is part of the active site. S41 serves as a coordination point for substrate. ATP is bound by residues D51, 112 to 115 (EGAG), and 202 to 204 (PKL). Residues D51 and E112 each contribute to the Mg(2+) site.

The protein belongs to the dethiobiotin synthetase family. Homodimer. The cofactor is Mg(2+).

It is found in the cytoplasm. The enzyme catalyses (7R,8S)-7,8-diammoniononanoate + CO2 + ATP = (4R,5S)-dethiobiotin + ADP + phosphate + 3 H(+). It functions in the pathway cofactor biosynthesis; biotin biosynthesis; biotin from 7,8-diaminononanoate: step 1/2. Functionally, catalyzes a mechanistically unusual reaction, the ATP-dependent insertion of CO2 between the N7 and N8 nitrogen atoms of 7,8-diaminopelargonic acid (DAPA, also called 7,8-diammoniononanoate) to form a ureido ring. This is ATP-dependent dethiobiotin synthetase BioD from Bacillus subtilis (strain 168).